A 438-amino-acid polypeptide reads, in one-letter code: 3-phosphoshikimate 1-carboxyvinyltransferase (438 aa).

The 3-phosphoshikimate site is built by K26, S27, and R31. Residue K26 coordinates phosphoenolpyruvate. Residues G99 and R127 each contribute to the phosphoenolpyruvate site. 3-phosphoshikimate-binding residues include S172, Q174, D320, and K347. Q174 serves as a coordination point for phosphoenolpyruvate. D320 (proton acceptor) is an active-site residue. The phosphoenolpyruvate site is built by R351 and R392.

It belongs to the EPSP synthase family. In terms of assembly, monomer.

The protein resides in the cytoplasm. It carries out the reaction 3-phosphoshikimate + phosphoenolpyruvate = 5-O-(1-carboxyvinyl)-3-phosphoshikimate + phosphate. It functions in the pathway metabolic intermediate biosynthesis; chorismate biosynthesis; chorismate from D-erythrose 4-phosphate and phosphoenolpyruvate: step 6/7. Its function is as follows. Catalyzes the transfer of the enolpyruvyl moiety of phosphoenolpyruvate (PEP) to the 5-hydroxyl of shikimate-3-phosphate (S3P) to produce enolpyruvyl shikimate-3-phosphate and inorganic phosphate. This chain is 3-phosphoshikimate 1-carboxyvinyltransferase, found in Xanthomonas campestris pv. campestris (strain B100).